We begin with the raw amino-acid sequence, 205 residues long: MKKIIICFIFVFSINISFADATSDLIDKIKNIHSMTANFNQKLIDGQTNNNLNSKGNMSLKKPQYFKWITTSPNNQEIVSNGTKLWIYDGDLDQLIIKKVSNDIAQFPYLILLSKNTNNINKLFTVTAQDNNSYILKPKNDQMIDSIKIKFTPNNQLEYLEISTSLNQFTKIEFNNVKTDVDISNTSFDFTAPQDTDIIDETKSA.

The signal sequence occupies residues 1–19 (MKKIIICFIFVFSINISFA).

This sequence belongs to the LolA family. As to quaternary structure, monomer.

The protein localises to the periplasm. Its function is as follows. Participates in the translocation of lipoproteins from the inner membrane to the outer membrane. Only forms a complex with a lipoprotein if the residue after the N-terminal Cys is not an aspartate (The Asp acts as a targeting signal to indicate that the lipoprotein should stay in the inner membrane). In Francisella tularensis subsp. novicida (strain U112), this protein is Outer-membrane lipoprotein carrier protein.